Here is a 475-residue protein sequence, read N- to C-terminus: Ribulose bisphosphate carboxylase large chain (475 aa).

The propeptide occupies 1 to 2 (MS). At Pro3 the chain carries N-acetylproline. At Lys14 the chain carries N6,N6,N6-trimethyllysine. 2 residues coordinate substrate: Asn123 and Thr173. Lys175 serves as the catalytic Proton acceptor. A substrate-binding site is contributed by Lys177. Mg(2+)-binding residues include Lys201, Asp203, and Glu204. Position 201 is an N6-carboxylysine (Lys201). His294 acts as the Proton acceptor in catalysis. Positions 295, 327, and 379 each coordinate substrate.

It belongs to the RuBisCO large chain family. Type I subfamily. As to quaternary structure, heterohexadecamer of 8 large chains and 8 small chains; disulfide-linked. The disulfide link is formed within the large subunit homodimers. Requires Mg(2+) as cofactor. The disulfide bond which can form in the large chain dimeric partners within the hexadecamer appears to be associated with oxidative stress and protein turnover.

Its subcellular location is the plastid. The protein localises to the chloroplast. It catalyses the reaction 2 (2R)-3-phosphoglycerate + 2 H(+) = D-ribulose 1,5-bisphosphate + CO2 + H2O. The enzyme catalyses D-ribulose 1,5-bisphosphate + O2 = 2-phosphoglycolate + (2R)-3-phosphoglycerate + 2 H(+). Its function is as follows. RuBisCO catalyzes two reactions: the carboxylation of D-ribulose 1,5-bisphosphate, the primary event in carbon dioxide fixation, as well as the oxidative fragmentation of the pentose substrate in the photorespiration process. Both reactions occur simultaneously and in competition at the same active site. In Viscum album (European mistletoe), this protein is Ribulose bisphosphate carboxylase large chain.